Consider the following 486-residue polypeptide: Cardiolipin synthase A (486 aa).

The next 2 membrane-spanning stretches (helical) occupy residues 3 to 23 (TFYTVMSWLLVFGYWLLIAGV) and 38 to 58 (MAWLLIIYILPLVGIIAYLSL). 2 PLD phosphodiesterase domains span residues 219–246 (MDLRQHRKVVLIDNYIAYTGSMNLVDPR) and 399–426 (EGGLLHSKSILVDGQLSLVGTVNLDMRS). Active-site residues include H224, K226, D231, H404, K406, and D411.

Belongs to the phospholipase D family. Cardiolipin synthase subfamily. ClsA sub-subfamily.

The protein localises to the cell inner membrane. The enzyme catalyses 2 a 1,2-diacyl-sn-glycero-3-phospho-(1'-sn-glycerol) = a cardiolipin + glycerol. Catalyzes the reversible phosphatidyl group transfer from one phosphatidylglycerol molecule to another to form cardiolipin (CL) (diphosphatidylglycerol) and glycerol. The protein is Cardiolipin synthase A of Erwinia tasmaniensis (strain DSM 17950 / CFBP 7177 / CIP 109463 / NCPPB 4357 / Et1/99).